A 309-amino-acid chain; its full sequence is Mitochondrial substrate carrier family protein ancA (309 aa).

Solcar repeat units lie at residues 10-102 (SSFV…YKKF), 114-203 (KFFI…AKGI), and 216-299 (ASWG…IQKL). 5 helical membrane-spanning segments follow: residues 12–41 (FVKD…LLLQ), 79–103 (LANV…KKFF), 113–133 (TKFF…SLLF), 181–201 (VSVG…DTAK), and 215–235 (WASW…SYPF). 2 residues coordinate ADP: Arg-84 and Lys-96. Arg-239 contacts ADP. The important for transport activity stretch occupies residues 239–244 (RRRMMM). Residues 239-244 (RRRMMM) carry the Nucleotide carrier signature motif motif. A helical membrane pass occupies residues 276-293 (ALSNAIRGSGGALVLVIY).

This sequence belongs to the mitochondrial carrier (TC 2.A.29) family. Monomer.

The protein resides in the mitochondrion inner membrane. It carries out the reaction ADP(in) + ATP(out) = ADP(out) + ATP(in). Its activity is regulated as follows. The matrix-open state (m-state) is inhibited by the membrane-permeable bongkrekic acid (BKA). The cytoplasmic-open state (c-state) is inhibited by the membrane-impermeable toxic inhibitor carboxyatractyloside (CATR). ADP:ATP antiporter that mediates import of ADP into the mitochondrial matrix for ATP synthesis, and export of ATP out to fuel the cell. Cycles between the cytoplasmic-open state (c-state) and the matrix-open state (m-state): operates by the alternating access mechanism with a single substrate-binding site intermittently exposed to either the cytosolic (c-state) or matrix (m-state) side of the inner mitochondrial membrane. The protein is Mitochondrial substrate carrier family protein ancA (ancA) of Dictyostelium discoideum (Social amoeba).